The sequence spans 144 residues: Large ribosomal subunit protein uL16 (144 aa).

The protein belongs to the universal ribosomal protein uL16 family. In terms of assembly, part of the 50S ribosomal subunit.

Functionally, binds 23S rRNA and is also seen to make contacts with the A and possibly P site tRNAs. This chain is Large ribosomal subunit protein uL16, found in Erythrobacter litoralis (strain HTCC2594).